Consider the following 388-residue polypeptide: bZIP transcription factor 1-D (388 aa).

4 disordered regions span residues 1-49 (MGSS…PIPP), 103-249 (FAPY…GPTT), 261-316 (TASS…RKQA), and 348-388 (ELLS…KDTN). Composition is skewed to low complexity over residues 23–33 (PPATSSTATPT) and 117–129 (AAGT…TAGG). Polar residues predominate over residues 169–179 (SGASANGTISQ). Positions 180–193 (SGESGSESSSEGSE) are enriched in low complexity. Positions 214 to 231 (RSSQNGVSPSPSQAQLKQ) are enriched in polar residues. In terms of domain architecture, bZIP spans 293-356 (ELKRQKRKQS…DELLSKNSSL (64 aa)). The interval 295 to 314 (KRQKRKQSNRDSARRSRLRK) is basic motif. The segment covering 302–316 (SNRDSARRSRLRKQA) has biased composition (basic and acidic residues). Residues 321-356 (LAQRAEVLKQENASLKDEVSRIRKEYDELLSKNSSL) form a leucine-zipper region. 2 stretches are compositionally biased toward basic and acidic residues: residues 359–369 (NVGDKQHKTDE) and 375–388 (KLQH…KDTN).

Belongs to the bZIP family. As to expression, highly expressed in roots and at lower levels in stems and leaves.

It is found in the nucleus. Probable transcription factor that may be involved in responses to fungal pathogen infection and abiotic stresses. The chain is bZIP transcription factor 1-D from Triticum aestivum (Wheat).